Reading from the N-terminus, the 491-residue chain is Tyrosine 3-monooxygenase (491 aa).

Position 19 is a phosphoserine; by CaMK2 (Ser-19). Ser-31 is modified (phosphoserine). Ser-40 carries the phosphoserine; by CaMK2 and PKA modification. Fe cation contacts are provided by His-324, His-329, and Glu-369. Ser-465 carries the post-translational modification Phosphoserine.

This sequence belongs to the biopterin-dependent aromatic amino acid hydroxylase family. In terms of assembly, homotetramer. Interacts (when phosphorylated at Ser-19) with YWHAG; one YWHAG dimer bounds to one TH tetramer and this interaction may influence the phosphorylation and dephosphorylation of other sites. Interacts with NT5DC2; the interaction results in reduced phosphorylation and decreased catalytic activity of TH. The cofactor is Fe(2+). Post-translationally, phosphorylated on Ser-19, Ser-31 and Ser-40 by several protein kinases with different site specificities. Phosphorylation at Ser-31 and Ser-40 leads to an increase of TH activity. Phosphorylation at Ser-40 activates the enzyme and also counteracts the feedback inhibition of TH by catecholamines. Phosphorylation of Ser-19 and Ser-31 triggers the proteasomal degradation of TH through the ubiquitin-proteasome pathway. Phosphorylation at Ser-31 facilitates transport of TH from the soma to the nerve terminals via the microtubule network. Phosphorylation at Ser-19 induces the high-affinity binding to the 14-3-3 protein YWHAG; this interaction may influence the phosphorylation and dephosphorylation of other sites. Ser-19 increases the phosphorylation at Ser-40 in a hierarchical manner, leading to increased activity.

It is found in the cytoplasm. Its subcellular location is the perinuclear region. It localises to the nucleus. The protein localises to the cell projection. The protein resides in the axon. It is found in the cytoplasmic vesicle. Its subcellular location is the secretory vesicle. It localises to the synaptic vesicle. The enzyme catalyses (6R)-L-erythro-5,6,7,8-tetrahydrobiopterin + L-tyrosine + O2 = (4aS,6R)-4a-hydroxy-L-erythro-5,6,7,8-tetrahydrobiopterin + L-dopa. Its pathway is catecholamine biosynthesis; dopamine biosynthesis; dopamine from L-tyrosine: step 1/2. With respect to regulation, inhibited in feedback fashion by the catecholamine neurotransmitters, especially by dopamine in competition with tetrahydrobiopterin. Phosphorylation of several Ser/Thr residues in the N-terminus regulates the catalytic activity. Ser-31 and Ser-40 are readily phosphorylated to activate the catalytic activity. A Cysteine modification induced by N-ethylmaleimide (NEM), inhibits tyrosine 3-monooxygenase activity through the modification of the Cys-170. Functionally, catalyzes the conversion of L-tyrosine to L-dihydroxyphenylalanine (L-Dopa), the rate-limiting step in the biosynthesis of catecholamines, dopamine, noradrenaline, and adrenaline. Uses tetrahydrobiopterin and molecular oxygen to convert tyrosine to L-Dopa. In addition to tyrosine, is able to catalyze the hydroxylation of phenylalanine and tryptophan with lower specificity. Positively regulates the regression of retinal hyaloid vessels during postnatal development. This Bos taurus (Bovine) protein is Tyrosine 3-monooxygenase (TH).